Here is a 149-residue protein sequence, read N- to C-terminus: Large ribosomal subunit protein bL9 (149 aa).

It belongs to the bacterial ribosomal protein bL9 family.

Functionally, binds to the 23S rRNA. This chain is Large ribosomal subunit protein bL9, found in Syntrophus aciditrophicus (strain SB).